A 435-amino-acid chain; its full sequence is Prenyltransferase nanD (435 aa).

Residue E101 participates in substrate binding. Dimethylallyl diphosphate is bound by residues R114, K202, and Y204. Y206 provides a ligand contact to substrate. Dimethylallyl diphosphate contacts are provided by K280, Y282, Y364, Y429, and Y433.

The protein belongs to the tryptophan dimethylallyltransferase family.

Its pathway is secondary metabolite biosynthesis. In terms of biological role, prenyltransferase; part of the gene cluster that mediates the biosynthesis of the benzazepine alkaloid nanangelenin A which contains an unprecedented 3,4-dihydro-1-benzazepine-2,5-dione-N-prenyl-N-acetoxy-anthranilamide scaffold. The first step of nanangelenin biosynthesis is catalyzed by the indoleamine 2,3-dioxygenase nanC which produces N-formyl-kynurenine through the catabolism of tryptophan. The two-module NRPS nanA then utilizes anthranilate (Ant) and L-kynurenine (L-Kyn) to assemble the dipeptide product nanangelenin B. The first adenylation domain of nanA (A1) loads anthranilate onto the T1 domain, while A2 loads kynurenine, generated through spontaneous nonenzymatic deformylation of the nanC-supplied N-formyl-kynurenine. The peptide bond formation between the tethered amino acids is catalyzed by the first condensation domain (C1) between anthranilate's carbonyl carbon and kynurenine's aliphatic primary amine. The second C domain (C2) catalyzes the final cyclization event between the aromatic amine of kynurenine and the tethered carbonyl carbon, yielding nanangelenin B. The terminal T3 domain enhances the catalytic efficiency of C2, suggesting the T2-tethered Ant-L-Kyn is transferred to T3 prior to cyclization by C2. Once released from nanA, nanangelenin B is then prenylated by the prenyltransferase nanD to form nanangelenin C. Nanangelenin C is then N-hydroxylated by the FAD-dependent monooxygenase nanF and further acetylated by the acetyltransferase nanB to yield nanangelenin F. Finally, the N-methyltransferase nanE methylates the amide nitrogen of 1-benzazepine to convert nanangelenin F into nanangelenin A. NanE is also able to methylate most of the intermediates of the pathway such as nanangelenin B and nanangelenin C to produce nanangelenin D and nanangelenin E, respectively. This chain is Prenyltransferase nanD, found in Aspergillus nanangensis.